The chain runs to 301 residues: Glycine--tRNA ligase alpha subunit (301 aa).

This sequence belongs to the class-II aminoacyl-tRNA synthetase family. As to quaternary structure, tetramer of two alpha and two beta subunits.

The protein localises to the cytoplasm. It catalyses the reaction tRNA(Gly) + glycine + ATP = glycyl-tRNA(Gly) + AMP + diphosphate. In Shewanella oneidensis (strain ATCC 700550 / JCM 31522 / CIP 106686 / LMG 19005 / NCIMB 14063 / MR-1), this protein is Glycine--tRNA ligase alpha subunit.